A 22-amino-acid chain; its full sequence is Melittin-like peptide (22 aa).

The residue at position 22 (Q22) is a Glutamine amide.

As to expression, expressed by the skin dorsal glands.

It localises to the secreted. This chain is Melittin-like peptide, found in Rana temporaria (European common frog).